Here is a 204-residue protein sequence, read N- to C-terminus: Probable nicotinate-nucleotide adenylyltransferase (204 aa).

Belongs to the NadD family.

It carries out the reaction nicotinate beta-D-ribonucleotide + ATP + H(+) = deamido-NAD(+) + diphosphate. The protein operates within cofactor biosynthesis; NAD(+) biosynthesis; deamido-NAD(+) from nicotinate D-ribonucleotide: step 1/1. Functionally, catalyzes the reversible adenylation of nicotinate mononucleotide (NaMN) to nicotinic acid adenine dinucleotide (NaAD). The sequence is that of Probable nicotinate-nucleotide adenylyltransferase from Dehalococcoides mccartyi (strain ATCC BAA-2266 / KCTC 15142 / 195) (Dehalococcoides ethenogenes (strain 195)).